An 833-amino-acid chain; its full sequence is MKVHIHTKFCLICLLTFIFHHCNHCHEDHDHGPEELHRHHRGMTESESSKFSVQDAENEKKYYIEKLFDRYGENGRLSFFGLEKLLTNLGLGEIKVVEINHEDLGHDHVSHLDILAVQEGKHFHSHTHQHFHNHLNAENHTTTSVTSKRNHKCDPEKEAAELPIKADDKHLHDRNHRFHHRHRLHHHLDHNTTRHVHNDSVAHSEHGEPGHSPSPETNKTQEQSEVKSVKVRRKEKGKRKKENSEVNTPGFLPNHDHSEQYEHNRVHKLDRVHSPGHPHAHLPEHSGHELGHGHQELDPDNEGELRHTRKREAPHVRKSAIYSTPSHKDQSEDDRQHECLNVTQLLKHFGLGPNSPISPDLFTYLCPALLYQIDSRLCIEHFDKLLVEDLNKDKTLVPEDKTNIGASAWICGIISITVISLLSLLGVILVPIINQGCFKFLLTFLVALAVGTMSGDALLHLLPHSQGGHDHSHQHTHGHGHSHGHESKEFLEEYDAVLKGLVALGGIYLLFIIEHCIRMFKHYKQQRGKQKWFMKQSTEESTIGRKLSDHKLNSTPDADWLQLKPLAGTDDSVVSEDRLNETELTDLEAQQESPPKNYLGVEEEKIMDHSHSDGLHTIHEHEVHVTSHNHHDEDKAVLRKHSHQWHHRHAHHSHGPCHSGSDLKETGIANIAWMVIMGDGIHNFSDGLAIGAAFSAGLTGGISTSIAVFCHELPHELGDFAVLLKAGMTVKQAIVYNLLSAMMAYIGMLIGTAVGQYANNITLWIFAITAGMFLYVALVDMLPEMLHGDGDHEEHGFCPVGQFILQNLGLLFGFAIMLVIALYEDKIVFDIQF.

Positions 1-25 (MKVHIHTKFCLICLLTFIFHHCNHC) are cleaved as a signal peptide. Residues 30 to 48 (DHGPEELHRHHRGMTESES) show a composition bias toward basic and acidic residues. Disordered stretches follow at residues 30 to 54 (DHGP…FSVQ) and 137 to 167 (AENH…IKAD). The segment covering 137-147 (AENHTTTSVTS) has biased composition (polar residues). Over residues 152-167 (KCDPEKEAAELPIKAD) the composition is skewed to basic and acidic residues. N-linked (GlcNAc...) asparagine glycosylation is found at Asn191 and Asn198. The span at 200 to 209 (SVAHSEHGEP) shows a compositional bias: basic and acidic residues. Disordered stretches follow at residues 200-257 (SVAH…NHDH) and 271-335 (RVHS…EDDR). The N-linked (GlcNAc...) asparagine glycan is linked to Asn218. Residues 229-241 (VKVRRKEKGKRKK) are compositionally biased toward basic residues. Basic and acidic residues-rich tracts occupy residues 281 to 315 (HLPE…EAPH) and 326 to 335 (SHKDQSEDDR). An N-linked (GlcNAc...) asparagine glycan is attached at Asn341. 2 helical membrane passes run 413–433 (IISI…VPII) and 440–460 (FLLT…ALLH). A disordered region spans residues 466–485 (QGGHDHSHQHTHGHGHSHGH). A helical transmembrane segment spans residues 497-517 (VLKGLVALGGIYLLFIIEHCI). Thr538 and Thr555 each carry phosphothreonine. Phosphoserine is present on Ser593. The next 4 helical transmembrane spans lie at 689 to 709 (AIGA…IAVF), 734 to 754 (IVYN…GTAV), 761 to 781 (ITLW…LVDM), and 803 to 823 (FILQ…IALY).

Belongs to the ZIP transporter (TC 2.A.5) family. As to quaternary structure, interacts with SLC39A6. This interaction triggers cells to undergo EMT and mitosis. Found in a complex with SLC39A6, SLC39A10 and with the 'Ser-727' phosphorylated form of STAT3 throughout mitosis. Found in a complex with SLC39A6, SLC39A10 and with NCAM1; this complex controls NCAM1 phosphorylation and integration into focal adhesion complexes during epithelial-tomesenchymal transition. Found in a complex with SLC39A6, SLC39A10 and with GSK3B that controls NCAM1 phosphorylation. In terms of processing, undergoes N-terminal ectodomain shedding. As to expression, expressed in the liver, kidney and brain.

The protein localises to the cell membrane. The protein resides in the apical cell membrane. It carries out the reaction Zn(2+)(in) = Zn(2+)(out). Zinc-influx transporter. When associated with SLC39A6, the heterodimer formed by SLC39A10 and SLC39A6 mediates cellular zinc uptake to trigger cells to undergo epithelial-to-mesenchymal transition (EMT). mediates cellular zinc uptake to trigger cells to undergo epithelial-to-mesenchymal transition (EMT). SLC39A10-SLC39A6 heterodimers play also an essentiel role in initiating mitosis by importing zinc into cells to initiate a pathway resulting in the onset of mitosis. Plays an important for both mature B-cell maintenance and humoral immune responses. When associated with SLC39A10, the heterodimer controls NCAM1 phosphorylation and integration into focal adhesion complexes during EMT. This is Zinc transporter ZIP10 from Mus musculus (Mouse).